Consider the following 1228-residue polypeptide: Probable phospholipid-transporting ATPase 5 (1228 aa).

At 1–74 (MARGRIRSKL…TTRYNLITFF (74 aa)) the chain is on the cytoplasmic side. A helical transmembrane segment spans residues 75-96 (PKSLYEQFHRAANLYFLVAAIL). Over 97-100 (SVFP) the chain is Extracellular. A helical transmembrane segment spans residues 101 to 123 (LSPFNKWSMIAPLVFVVGLSMLK). The Cytoplasmic segment spans residues 124–305 (EALEDWRRFM…SRIERTMDYI (182 aa)). Residues 306–327 (IYTLLVLLILISCISSSGFAWE) traverse the membrane as a helical segment. Residues 328–359 (TEFHMPKMWYLRPGEPIDFTNPINPIYAGVVH) lie on the Extracellular side of the membrane. Residues 360-377 (LITALLLYGYLIPISLYV) form a helical membrane-spanning segment. Topologically, residues 378–934 (SIEVVKVWQA…HGHWCYKRIA (557 aa)) are cytoplasmic. Residue aspartate 425 is the 4-aspartylphosphate intermediate of the active site. Lysine 616 is covalently cross-linked (Glycyl lysine isopeptide (Lys-Gly) (interchain with G-Cter in ubiquitin)). Residues aspartate 879 and aspartate 883 each coordinate Mg(2+). Residues 935–954 (QMICYFFYKNIAFGLTLFYF) traverse the membrane as a helical segment. The Extracellular segment spans residues 955–968 (EAFTGFSGQSVYND). Residues 969 to 988 (YYLLLFNVVLTSLPVIALGV) form a helical membrane-spanning segment. The Cytoplasmic segment spans residues 989-1018 (FEQDVSSEICLQFPALYQQGTKNLFFDWSR). A helical transmembrane segment spans residues 1019–1041 (ILGWMCNGVYASLVIFFLNIGII). The Extracellular portion of the chain corresponds to 1042–1054 (YSQAFRDNGQTAD). A helical membrane pass occupies residues 1055-1077 (MDAVGTTMFTCIIWAANVQIALT). Over 1078–1083 (MSHFTW) the chain is Cytoplasmic. Residues 1084–1104 (IQHVLIWGSIGMWYLFVAIYS) form a helical membrane-spanning segment. Topologically, residues 1105–1117 (MMPPSYSGNIYRI) are extracellular. The chain crosses the membrane as a helical span at residues 1118 to 1146 (LDEILAPAPIYWMATLLVTVAAVLPYVAH). Topologically, residues 1147–1228 (IAFQRFLNPL…AQDAMSPRSL (82 aa)) are cytoplasmic.

This sequence belongs to the cation transport ATPase (P-type) (TC 3.A.3) family. Type IV subfamily.

It is found in the membrane. It carries out the reaction ATP + H2O + phospholipidSide 1 = ADP + phosphate + phospholipidSide 2.. Involved in transport of phospholipids. The polypeptide is Probable phospholipid-transporting ATPase 5 (Arabidopsis thaliana (Mouse-ear cress)).